Consider the following 555-residue polypeptide: Ribonuclease J2 (555 aa).

Residues H74, H76, H142, and D164 each coordinate Zn(2+). Substrate is bound at residue 364 to 368 (HVSGH).

Belongs to the metallo-beta-lactamase superfamily. RNA-metabolizing metallo-beta-lactamase-like family. Bacterial RNase J subfamily. In terms of assembly, unclear whether it forms homodimers or belongs to a larger complex. According to probably does not form homodimers, while shows homodimer formation. Both reports show RNase J1 and J2 interaction, probably as a heterotetramer shows it is a component of a possible RNA degradosome complex composed of rny, rnjA, rnjB, pnp, pfkA and eno, while finds no evidence of an RNA degradosome complex. Zn(2+) serves as cofactor.

It localises to the cytoplasm. Endonucleolytically cleaves the 5'-leader sequence of certain mRNAs. Endonuclease digestion by the RNase J1/J2 complex occurs at a different site and in some cases more efficiently than J1 or J2 alone. The exonuclease activity of the J1/J2 complex is highly processive on substrates longer than 5 nucleotides, on shorter substrates is distributive. Plays a role in mRNA maturation and stability. Appears to have a limited effect on 16S rRNA maturation, despite its similarity to RNase J1. This subunit alone has very poor 5'-3' exonuclease activity. The chain is Ribonuclease J2 from Bacillus subtilis (strain 168).